Reading from the N-terminus, the 253-residue chain is 3-deoxy-manno-octulosonate cytidylyltransferase (253 aa).

The protein belongs to the KdsB family.

The protein localises to the cytoplasm. The enzyme catalyses 3-deoxy-alpha-D-manno-oct-2-ulosonate + CTP = CMP-3-deoxy-beta-D-manno-octulosonate + diphosphate. It participates in nucleotide-sugar biosynthesis; CMP-3-deoxy-D-manno-octulosonate biosynthesis; CMP-3-deoxy-D-manno-octulosonate from 3-deoxy-D-manno-octulosonate and CTP: step 1/1. It functions in the pathway bacterial outer membrane biogenesis; lipopolysaccharide biosynthesis. Activates KDO (a required 8-carbon sugar) for incorporation into bacterial lipopolysaccharide in Gram-negative bacteria. The chain is 3-deoxy-manno-octulosonate cytidylyltransferase from Acinetobacter baumannii (strain AYE).